The following is a 398-amino-acid chain: Alpha-2,8-sialyltransferase 8F (398 aa).

The Cytoplasmic segment spans residues 1–3 (MRP). The chain crosses the membrane as a helical; Signal-anchor for type II membrane protein span at residues 4 to 24 (GGALLALLASLLLLLLLRLLW). Residues 25–398 (CPADAPGRAR…KLQFSKCEVA (374 aa)) lie on the Lumenal side of the membrane. Residues N66, N93, N151, and N196 are each glycosylated (N-linked (GlcNAc...) asparagine). 2 disulfide bridges follow: C186-C335 and C200-C395. Substrate-binding positions include N214, 236–238 (NPS), and 322–324 (STG). The Proton donor/acceptor role is filled by H370.

This sequence belongs to the glycosyltransferase 29 family.

It localises to the golgi apparatus membrane. It catalyses the reaction a ganglioside GM3 + CMP-N-acetyl-beta-neuraminate = a ganglioside GD3 + CMP + H(+). It carries out the reaction a ganglioside GM3 (d18:1(4E)) + CMP-N-acetyl-beta-neuraminate = a ganglioside GD3 (d18:1(4E)) + CMP + H(+). The enzyme catalyses a ganglioside GD1a (d18:1(4E)) + CMP-N-acetyl-beta-neuraminate = a ganglioside GT1a (d18:1(4E)) + CMP + H(+). The catalysed reaction is a ganglioside GD1a + CMP-N-acetyl-beta-neuraminate = a ganglioside GT1a + CMP + H(+). It catalyses the reaction a ganglioside GM1b (d18:1(4E)) + CMP-N-acetyl-beta-neuraminate = a ganglioside GD1c (d18:1(4E)) + CMP + H(+). It carries out the reaction a ganglioside GM1b + CMP-N-acetyl-beta-neuraminate = a ganglioside GD1c + CMP + H(+). The enzyme catalyses a ganglioside GM4 (d18:1(4E)) + CMP-N-acetyl-beta-neuraminate = an N-acetyl-alpha-neuraminosyl-(2-&gt;8)-N-acetyl-alpha-neuraminosyl-(2-&gt;3)-beta-D-galactosyl-(1&lt;-&gt;1')-N-acylsphing-4-enine + CMP + H(+). The catalysed reaction is N-acetyl-alpha-neuraminosyl-(2-&gt;3)-beta-D-galactosyl-(1&lt;-&gt;1')-ceramide + CMP-N-acetyl-beta-neuraminate = N-acetyl-alpha-neuraminosyl-(2-&gt;8)-N-acetyl-alpha-neuraminosyl-(2-&gt;3)-beta-D-galactosyl-(1&lt;-&gt;1')-ceramide + CMP + H(+). It catalyses the reaction a ganglioside GT1b (d18:1(4E)) + CMP-N-acetyl-beta-neuraminate = a ganglioside GQ1b (d18:1(4E)) + CMP + H(+). It carries out the reaction a ganglioside GT1b + CMP-N-acetyl-beta-neuraminate = a ganglioside GQ1b + CMP + H(+). It participates in protein modification; protein glycosylation. Alpha-2,8-sialyltransferase that prefers O-glycans to N-glycans or glycolipids as acceptor substrates. The minimal acceptor substrate is the NeuAc-alpha-2,3(6)-Gal sequence at the non-reducing end of their carbohydrate groups. The protein is Alpha-2,8-sialyltransferase 8F (ST8SIA6) of Pan troglodytes (Chimpanzee).